The following is a 909-amino-acid chain: Villin-1 (909 aa).

Gelsolin-like repeat units lie at residues 29-79 (KQLI…VDSI), 149-189 (VRVK…QEKA), 262-305 (GNLH…TERK), 391-448 (LKVW…QDRA), 529-569 (MQAI…SDHE), and 631-672 (LKVK…KSKE). 2 disordered regions span residues 733–781 (SLKG…CSSE) and 816–835 (DGVA…QKPR). Residues 752 to 762 (QSKDNASRDLQ) show a composition bias toward basic and acidic residues. Serine 780 carries the post-translational modification Phosphoserine. An HP domain is found at 844 to 909 (SLESLAYSYE…NKLKISLHLF (66 aa)).

This sequence belongs to the villin/gelsolin family. Expressed in all tissues examined. Mainly detected in the vascular tissue and the pericycle of roots and in the vasculature of leaves. Not expressed in the root cap.

It is found in the cytoplasm. The protein resides in the cytoskeleton. In terms of biological role, binds actin and actin filament bundles in a Ca(2+)/calmodulin-insensitive manner, but is unable to sever, cap, and nucleate actin filament formation in vitro. Does not protect individual filaments from severing by VLN3 (AC O81645). In Arabidopsis thaliana (Mouse-ear cress), this protein is Villin-1.